Consider the following 761-residue polypeptide: uncharacterized protein (761 aa).

The CR-type zinc-finger motif lies at 1–84 (MIVKCPICDG…CGGSGKVVKC (84 aa)). Residues 135–200 (GKFYKGVVTR…EKREIDFKYI (66 aa)) enclose the S1 motif domain.

This is an uncharacterized protein from Methanocaldococcus jannaschii (strain ATCC 43067 / DSM 2661 / JAL-1 / JCM 10045 / NBRC 100440) (Methanococcus jannaschii).